The primary structure comprises 584 residues: Cationic amino acid transporter 7, chloroplastic (584 aa).

The N-terminal 49 residues, 1–49 (MEAQYRNHDGDTSFSSLRVYLNSLSDTPSRFSRRAVSVSTSYDEMSRVR), are a transit peptide targeting the chloroplast. A run of 14 helical transmembrane segments spans residues 62-82 (WYDL…FVTT), 90-110 (AGPS…LSAF), 131-151 (ITFG…DYVL), 185-205 (GFNE…FVIC), 214-234 (VNMV…VMGF), 254-274 (FFPF…LSYI), 293-313 (IPMG…LMAI), 346-366 (VVGI…MLGQ), 396-416 (ASAF…LNVL), 417-437 (LNLV…AVIF), 449-469 (WPTL…TLVW), 480-500 (FILG…HCVV), 508-528 (FWGV…NIFL), and 540-560 (FGFF…HASY).

This sequence belongs to the amino acid-polyamine-organocation (APC) superfamily. Cationic amino acid transporter (CAT) (TC 2.A.3.3) family.

The protein resides in the plastid. It is found in the chloroplast membrane. Functionally, permease involved in the transport of the cationic amino acids. The polypeptide is Cationic amino acid transporter 7, chloroplastic (CAT7) (Arabidopsis thaliana (Mouse-ear cress)).